Consider the following 273-residue polypeptide: Transmembrane protein 45A (273 aa).

5 helical membrane-spanning segments follow: residues 8 to 27, 55 to 79, 108 to 131, 153 to 171, and 217 to 236; these read ALPG…KNIL, VVVL…ALIL, IICF…AIFV, LLVF…EFLV, and MFLS…LIGV.

It belongs to the TMEM45 family.

Its subcellular location is the membrane. The polypeptide is Transmembrane protein 45A (Tmem45a) (Mus musculus (Mouse)).